Reading from the N-terminus, the 457-residue chain is Dihydrolipoyl dehydrogenase (457 aa).

Residues 32 to 40, lysine 49, and alanine 113 contribute to the FAD site; that span reads EKQYFGGVC. A disulfide bond links cysteine 40 and cysteine 45. NAD(+) contacts are provided by residues 178–182, valine 235, and 262–265; these read GGGVI and SIGR. FAD is bound by residues aspartate 303 and alanine 311. The Proton acceptor role is filled by histidine 437.

This sequence belongs to the class-I pyridine nucleotide-disulfide oxidoreductase family. In terms of assembly, homodimer. Requires FAD as cofactor.

The protein resides in the cytoplasm. The catalysed reaction is N(6)-[(R)-dihydrolipoyl]-L-lysyl-[protein] + NAD(+) = N(6)-[(R)-lipoyl]-L-lysyl-[protein] + NADH + H(+). In terms of biological role, lipoamide dehydrogenase is a component of the alpha-ketoacid dehydrogenase complexes. This chain is Dihydrolipoyl dehydrogenase (pdhD), found in Mycoplasma genitalium (strain ATCC 33530 / DSM 19775 / NCTC 10195 / G37) (Mycoplasmoides genitalium).